The primary structure comprises 245 residues: Adenosylcobinamide-GDP ribazoletransferase (245 aa).

Helical transmembrane passes span 31–51 (FGRA…VLYG), 61–81 (PLLQ…ALHL), 113–133 (AAVV…AALL), 138–158 (PGLL…LFLT), and 192–212 (LAFG…FAWL).

Belongs to the CobS family. Mg(2+) serves as cofactor.

It is found in the cell inner membrane. It carries out the reaction alpha-ribazole + adenosylcob(III)inamide-GDP = adenosylcob(III)alamin + GMP + H(+). The catalysed reaction is alpha-ribazole 5'-phosphate + adenosylcob(III)inamide-GDP = adenosylcob(III)alamin 5'-phosphate + GMP + H(+). It participates in cofactor biosynthesis; adenosylcobalamin biosynthesis; adenosylcobalamin from cob(II)yrinate a,c-diamide: step 7/7. Joins adenosylcobinamide-GDP and alpha-ribazole to generate adenosylcobalamin (Ado-cobalamin). Also synthesizes adenosylcobalamin 5'-phosphate from adenosylcobinamide-GDP and alpha-ribazole 5'-phosphate. The polypeptide is Adenosylcobinamide-GDP ribazoletransferase (Pseudomonas paraeruginosa (strain DSM 24068 / PA7) (Pseudomonas aeruginosa (strain PA7))).